A 39-amino-acid polypeptide reads, in one-letter code: Photosystem II reaction center protein Psb30 (39 aa).

Residues I12 to L32 form a helical membrane-spanning segment.

Belongs to the Psb30/Ycf12 family. In terms of assembly, PSII is composed of 1 copy each of membrane proteins PsbA, PsbB, PsbC, PsbD, PsbE, PsbF, PsbH, PsbI, PsbJ, PsbK, PsbL, PsbM, PsbT, PsbX, PsbY, PsbZ, Psb30/Ycf12, peripheral proteins PsbO, CyanoQ (PsbQ), PsbU, PsbV and a large number of cofactors. It forms dimeric complexes.

The protein localises to the cellular thylakoid membrane. A core subunit of photosystem II (PSII), probably helps stabilize the reaction center. The polypeptide is Photosystem II reaction center protein Psb30 (Rippkaea orientalis (strain PCC 8801 / RF-1) (Cyanothece sp. (strain PCC 8801))).